Consider the following 358-residue polypeptide: Chorismate synthase (358 aa).

Arg-46 provides a ligand contact to NADP(+). Residues 123–125, 235–236, Gly-275, 290–294, and Arg-316 each bind FMN; these read RSS, NA, and KPTPS.

The protein belongs to the chorismate synthase family. As to quaternary structure, homotetramer. FMNH2 is required as a cofactor.

It catalyses the reaction 5-O-(1-carboxyvinyl)-3-phosphoshikimate = chorismate + phosphate. The protein operates within metabolic intermediate biosynthesis; chorismate biosynthesis; chorismate from D-erythrose 4-phosphate and phosphoenolpyruvate: step 7/7. Its function is as follows. Catalyzes the anti-1,4-elimination of the C-3 phosphate and the C-6 proR hydrogen from 5-enolpyruvylshikimate-3-phosphate (EPSP) to yield chorismate, which is the branch point compound that serves as the starting substrate for the three terminal pathways of aromatic amino acid biosynthesis. This reaction introduces a second double bond into the aromatic ring system. In Sulfurimonas denitrificans (strain ATCC 33889 / DSM 1251) (Thiomicrospira denitrificans (strain ATCC 33889 / DSM 1251)), this protein is Chorismate synthase.